The chain runs to 359 residues: Peptide chain release factor 1 (359 aa).

Q234 bears the N5-methylglutamine mark. The disordered stretch occupies residues 283 to 305 (SQKDAARAADRRAQVGSGDRSER).

The protein belongs to the prokaryotic/mitochondrial release factor family. In terms of processing, methylated by PrmC. Methylation increases the termination efficiency of RF1.

The protein resides in the cytoplasm. Its function is as follows. Peptide chain release factor 1 directs the termination of translation in response to the peptide chain termination codons UAG and UAA. This chain is Peptide chain release factor 1, found in Methylobacterium nodulans (strain LMG 21967 / CNCM I-2342 / ORS 2060).